The following is a 388-amino-acid chain: Putative membrane protein MJ1562 (388 aa).

The next 6 helical transmembrane spans lie at 22-42 (FLMLLIILIITVFAGISATNV), 219-239 (SQSFTTTVGLIGILIILIIYF), 246-266 (IMPLLPVLIAVIWTGGAMGLL), 273-293 (ATAGIGSLILGLGIDYGIHLM), 320-340 (AVMATTATTVVGFLALVLAPL), and 351-371 (ALGISFCMVVVLTLLPALIVI).

The protein belongs to the resistance-nodulation-cell division (RND) (TC 2.A.6) family. MmpL subfamily.

It is found in the cell membrane. This Methanocaldococcus jannaschii (strain ATCC 43067 / DSM 2661 / JAL-1 / JCM 10045 / NBRC 100440) (Methanococcus jannaschii) protein is Putative membrane protein MJ1562.